Here is a 329-residue protein sequence, read N- to C-terminus: MTDWIDGQGRQIDYLRLSVTDRCDFRCVYCMAEDMRFLPRQQVLTLEEIERVARLFVAGGVRKLRLTGGEPLVRPGIVGLCERLAALPGLRELCMTSNGSQLVRYARPLYDAGLSRLNISLDTLDPLRFRAITRNGELDKVLAGIDAAQAAGFRRIKLNAVVMKGRNADEVPALVDFAIARGLDISFIEEMPLGQVGRERGESFCSSDEVRALIAQRHALLDSAEQSGGPARYVRLVEHPQTRIGFISPHSHNFCATCNRLRLTVEGRLLLCLGHEHSLDLRALLRRHPLHDGPLLEAIGEALQRKPARHEFSAAGEVQVLRFMNMSGG.

The Radical SAM core domain occupies 7-230 (GQGRQIDYLR…LDSAEQSGGP (224 aa)). Arginine 16 contributes to the GTP binding site. Residues cysteine 23 and cysteine 27 each contribute to the [4Fe-4S] cluster site. Tyrosine 29 contacts S-adenosyl-L-methionine. Cysteine 30 is a binding site for [4Fe-4S] cluster. A GTP-binding site is contributed by arginine 65. Glycine 69 contacts S-adenosyl-L-methionine. Threonine 96 contacts GTP. S-adenosyl-L-methionine is bound at residue serine 120. Lysine 157 contacts GTP. Position 191 (methionine 191) interacts with S-adenosyl-L-methionine. 2 residues coordinate [4Fe-4S] cluster: cysteine 255 and cysteine 258. A GTP-binding site is contributed by 260-262 (RLR). Cysteine 272 serves as a coordination point for [4Fe-4S] cluster.

Belongs to the radical SAM superfamily. MoaA family. As to quaternary structure, monomer and homodimer. [4Fe-4S] cluster is required as a cofactor.

It carries out the reaction GTP + AH2 + S-adenosyl-L-methionine = (8S)-3',8-cyclo-7,8-dihydroguanosine 5'-triphosphate + 5'-deoxyadenosine + L-methionine + A + H(+). It participates in cofactor biosynthesis; molybdopterin biosynthesis. Its function is as follows. Catalyzes the cyclization of GTP to (8S)-3',8-cyclo-7,8-dihydroguanosine 5'-triphosphate. The protein is GTP 3',8-cyclase 1 (moaA1) of Pseudomonas aeruginosa (strain ATCC 15692 / DSM 22644 / CIP 104116 / JCM 14847 / LMG 12228 / 1C / PRS 101 / PAO1).